The chain runs to 326 residues: Transcription factor bHLH143 (326 aa).

The span at 175 to 189 (SDDDDNDDWESDDEV) shows a compositional bias: acidic residues. Disordered regions lie at residues 175-194 (SDDD…STGH) and 234-275 (RDSS…EQSR). Residues 255–271 (PESNISSKQETGSGLSD) are compositionally biased toward polar residues. One can recognise a bHLH domain in the interval 263–312 (QETGSGLSDEQSRKDKIHTALRILESVVPGAKGKEALLLLDEAIDYLKLL).

In terms of assembly, homodimer.

The protein localises to the nucleus. This Arabidopsis thaliana (Mouse-ear cress) protein is Transcription factor bHLH143 (BHLH143).